We begin with the raw amino-acid sequence, 1664 residues long: MATDGASCEPDLSRAPEDAAGAAAEAAKKEFDVDTLSKSELRMLLSVMEGELEARDLVIEALRARRKEVFIQERYGRFNLNDPFLALQRDYEAGASDKEKKPVCTNPLSILEAVMAHCRKMQERMSTQLAAAESRQKKLEMEKLQLQALDQEHQKLAARLEEERGKNRHVVLMLVKECKQLSGKVIEEAQKLEEVMASLEEEKKKTNDLEEQLCTEKRRSAEMEAQMEKQLSEFDTEREQLRAKLNREEAHTTDLKEEIDKMKKMIEQLKRGSDSKPSLSLPRKTKDRRLASVSVATEGPVTRAVACQTDPVTESTDHVRKLPLTVPAKPSAGSPLVSANTKGNVCPHAAPGRPGMDRQASHGDLMGSSAPTIPAASASRMEANGPSPGSTPDLTSSTPPIPSGTTPAPAHAPGVATQSPVPAAPGHGLHSPCATTALHPGLNPRIQAARFRFQGNANDPDQNGNTTQSPPSRDVSPTSRDNLVAKQLARNTVTQALSRFTSPQVGTPPRPGVPPTGDVATHPPVSRSGLKTPGGARVDRGNPPPIPPKKPGLSQTPSPPHPQLKIPVDSSRASSAGAKVENKTVASPPSSLPPGSRVITEENPPKSSSPQLPPKPSIELTVAPAGCAVSALAASQVGAWPAETLGLKPPACSDSSLVIPNTIAFRSSINPVSASTSRPGASDSLLVTASGWSPSLTPLLMSGGPAPLAGRPTLLQQAAAQGNVTLLSMLLNEEGLDTNYSCEDGHSALYSAATNGHADCVRLLLNAEAQVNAAEKNGFTPLCAAAAQGHFECLELLLASDADVNHAADGGQTPLYLACKNGNTDCIKLLLEAGTDRSIKTRDGWTPVHAAVDTGNVDSLKLLMYYQAPARGNSSNEEEPESGAFARDGGEESSEGTSEPVVSADLINHADREGWTAAHIAASKGFKNCLEILCRHGGLEPEKRDKCNRTVHDVATDDCKHLLENLNALKIPLRISVGEIQPDNCGSDDFECENIICTLSIRKQTSWDDFSKAVSQALTNHFQAISSDGWWSLEDVAFNNTTDSSIGLSASSVRSITLGNMPWPAGRSFAPSPWDFVRKNKTEQVTALLSGPQEGCLSSVTYASMIPLKTLQNYLRLVEQYHNVIFHGPEGSLQDFIAHQLALCMKHRQMAAGFSCEIVRAEVDAGFSKEQLLDLFISSACLIPVKQSPVKKKIIIILENLENSSLSELLGDFLAPLENRSTESPCTFQKGNGASECYYFHENCFLMGTIAKACLQGSDLLVQQHFRWVQLRWDGEPMQGLLPRFLRRKVVNKFRGQVPAPCDPVHKTVAWALSVWRQLNSCLAHLGTPEALLGPKYFLSCPVVPGRAQATVKWMSKLWNAVIAPRVQAAILSRASVKRQPGLGQTAAKKHPSHGQQAVVKAALSILLNKAVLHGCPLPRAELDQHTADFRGGSFPLSIVSSYNSCSKKKGESGAWRKVSTSPRKKSGRFSSPIWNEPDLSPGGIKNKAISQLNCGRNTSLSKQKSLENELSLTLNLDQRFSLGSDDAADLVKELQSMCSSKSESDLSKIADSREELRTFHSSGSNPAFSAPVNNPRMPVAPKEVSPLSSHQATECSTSKSKTELGVSRVKSFLPVPRSKIAQCSQNTKRSSSSSNTRQPEINNNSKEENWNLHKHEQVEKPNT.

Disordered regions lie at residues 1-23 (MATDGASCEPDLSRAPEDAAGAA), 268-440 (QLKR…ALHP), 455-479 (GNANDPDQNGNTTQSPPSRDVSPTS), and 495-618 (QALS…KPSI). Positions 119 to 276 (RKMQERMSTQ…EQLKRGSDSK (158 aa)) form a coiled coil. Low complexity-rich tracts occupy residues 368-379 (SSAPTIPAASAS) and 395-407 (TSSTPPIPSGTTP). At Arg499 the chain carries Asymmetric dimethylarginine. 6 ANK repeats span residues 710–740 (GRPTLLQQAAAQGNVTLLSMLLNEEGLDTNY), 744–773 (DGHSALYSAATNGHADCVRLLLNAEAQVNA), 777–806 (NGFTPLCAAAAQGHFECLELLLASDADVNH), 810–839 (GGQTPLYLACKNGNTDCIKLLLEAGTDRSI), 843–872 (DGWTPVHAAVDTGNVDSLKLLMYYQAPARG), and 913–943 (EGWTAAHIAASKGFKNCLEILCRHGGLEPEK). Positions 871–900 (RGNSSNEEEPESGAFARDGGEESSEGTSEP) are disordered. Residues 1447 to 1483 (SKKKGESGAWRKVSTSPRKKSGRFSSPIWNEPDLSPG) form a disordered region. At Ser1525 the chain carries Phosphoserine. Residues 1558 to 1664 (RTFHSSGSNP…KHEQVEKPNT (107 aa)) are disordered. A compositionally biased stretch (polar residues) spans 1587 to 1600 (PLSSHQATECSTSK). Residues 1625 to 1639 (SQNTKRSSSSSNTRQ) are compositionally biased toward low complexity. Positions 1646-1664 (SKEENWNLHKHEQVEKPNT) are enriched in basic and acidic residues.

As to quaternary structure, interacts with CTTN/cortactin SH3 domain. Interacts with STRN, STRN4/zinedin and MOB4/phocein; this interactions mediate the association with the STRIPAK core complex and may regulate dendritic spine distribution of the STRIPAK complex in hippocampal neurons. Activation of glutamate receptors weakens the interaction with STRN and STRN4.

It localises to the cytoplasm. It is found in the cell cortex. The protein resides in the cell projection. The protein localises to the dendritic spine. In terms of biological role, regulates the dendritic spine distribution of CTTN/cortactin in hippocampal neurons, and thus controls dendritic spinogenesis and dendritic spine maintenance. Associates with the striatin-interacting phosphatase and kinase (STRIPAK) core complex to regulate dendritic spine distribution of the STRIPAK complex in hippocampal neurons. The protein is Cortactin-binding protein 2 (CTTNBP2) of Oryctolagus cuniculus (Rabbit).